The sequence spans 292 residues: tRNA pseudouridine synthase B (292 aa).

The active-site Nucleophile is the Asp38.

This sequence belongs to the pseudouridine synthase TruB family. Type 1 subfamily.

The enzyme catalyses uridine(55) in tRNA = pseudouridine(55) in tRNA. Functionally, responsible for synthesis of pseudouridine from uracil-55 in the psi GC loop of transfer RNAs. The chain is tRNA pseudouridine synthase B from Streptococcus gordonii (strain Challis / ATCC 35105 / BCRC 15272 / CH1 / DL1 / V288).